The primary structure comprises 236 residues: Phosphoribosylaminoimidazole-succinocarboxamide synthase (236 aa).

Belongs to the SAICAR synthetase family.

The catalysed reaction is 5-amino-1-(5-phospho-D-ribosyl)imidazole-4-carboxylate + L-aspartate + ATP = (2S)-2-[5-amino-1-(5-phospho-beta-D-ribosyl)imidazole-4-carboxamido]succinate + ADP + phosphate + 2 H(+). The protein operates within purine metabolism; IMP biosynthesis via de novo pathway; 5-amino-1-(5-phospho-D-ribosyl)imidazole-4-carboxamide from 5-amino-1-(5-phospho-D-ribosyl)imidazole-4-carboxylate: step 1/2. This is Phosphoribosylaminoimidazole-succinocarboxamide synthase from Chlorobium phaeobacteroides (strain DSM 266 / SMG 266 / 2430).